The primary structure comprises 149 residues: MQIILLEKVANLGQLGDVVNVKNGFARNFLIPQGKAKRATEANLKEFDARRAELEAKQAEILADAKVRAEKLNEAVITIAQKAGVDGRLFGSVTNVDVAEAVTAFGVQIKRHEVRLPNGPFKAIGEYDIEIALHHDVVTPIKIVVVGEA.

It belongs to the bacterial ribosomal protein bL9 family.

Its function is as follows. Binds to the 23S rRNA. This is Large ribosomal subunit protein bL9 from Chromobacterium violaceum (strain ATCC 12472 / DSM 30191 / JCM 1249 / CCUG 213 / NBRC 12614 / NCIMB 9131 / NCTC 9757 / MK).